The chain runs to 141 residues: NADH dehydrogenase [ubiquinone] 1 alpha subcomplex subunit 11 (141 aa).

Position 2 is an N-acetylalanine (A2). The next 2 membrane-spanning stretches (helical) occupy residues 22 to 43 and 58 to 80; these read TYATTSIGGAAGLVVSAYSVAL and RYTFTAAAIGAIFGLTSCISAQV.

As to quaternary structure, complex I is composed of 45 different subunits.

It is found in the mitochondrion inner membrane. Accessory subunit of the mitochondrial membrane respiratory chain NADH dehydrogenase (Complex I), that is believed not to be involved in catalysis. Complex I functions in the transfer of electrons from NADH to the respiratory chain. The immediate electron acceptor for the enzyme is believed to be ubiquinone. This Bos taurus (Bovine) protein is NADH dehydrogenase [ubiquinone] 1 alpha subcomplex subunit 11 (NDUFA11).